The chain runs to 156 residues: Transcriptional repressor NrdR (156 aa).

The segment at 3 to 34 (CPYCGHLDNKVIDSRINKDATITRRRRSCLAC) is a zinc-finger region. The region spanning 49–139 (PMLVKKDGRR…VYRQFKDVDE (91 aa)) is the ATP-cone domain.

It belongs to the NrdR family. Zn(2+) is required as a cofactor.

Functionally, negatively regulates transcription of bacterial ribonucleotide reductase nrd genes and operons by binding to NrdR-boxes. The protein is Transcriptional repressor NrdR of Desulfotalea psychrophila (strain LSv54 / DSM 12343).